Reading from the N-terminus, the 561-residue chain is uncharacterized protein (561 aa).

Low complexity predominate over residues 314-323 (ANNGSGDSSS). A disordered region spans residues 314-366 (ANNGSGDSSSTALNNESPNTTPKSRTFFSPKGHRRNSSHVSSLTSRSTKKPIT). A compositionally biased stretch (polar residues) spans 324–340 (TALNNESPNTTPKSRTF). Ser514 carries the post-translational modification Phosphoserine.

It localises to the cytoplasm. This is an uncharacterized protein from Saccharomyces cerevisiae (strain ATCC 204508 / S288c) (Baker's yeast).